A 291-amino-acid polypeptide reads, in one-letter code: Pantothenate synthetase (291 aa).

An ATP-binding site is contributed by Met-30–His-37. His-37 functions as the Proton donor in the catalytic mechanism. Gln-61 provides a ligand contact to (R)-pantoate. Residue Gln-61 coordinates beta-alanine. Gly-147 to Asp-150 is an ATP binding site. Position 153 (Gln-153) interacts with (R)-pantoate. Residues Val-176 and Leu-184 to Arg-187 each bind ATP.

This sequence belongs to the pantothenate synthetase family. In terms of assembly, homodimer.

The protein resides in the cytoplasm. It catalyses the reaction (R)-pantoate + beta-alanine + ATP = (R)-pantothenate + AMP + diphosphate + H(+). The protein operates within cofactor biosynthesis; (R)-pantothenate biosynthesis; (R)-pantothenate from (R)-pantoate and beta-alanine: step 1/1. Its function is as follows. Catalyzes the condensation of pantoate with beta-alanine in an ATP-dependent reaction via a pantoyl-adenylate intermediate. The polypeptide is Pantothenate synthetase (Koribacter versatilis (strain Ellin345)).